The following is a 238-amino-acid chain: Probable transcriptional regulatory protein YeeN (238 aa).

It belongs to the TACO1 family. YeeN subfamily.

Its subcellular location is the cytoplasm. This chain is Probable transcriptional regulatory protein YeeN, found in Salmonella choleraesuis (strain SC-B67).